The primary structure comprises 344 residues: Beta-hexosaminidase (344 aa).

Residues D60, R68, R132, and 162-163 (KH) each bind substrate. The active-site Proton donor/acceptor is the H175. The active-site Nucleophile is D247.

Belongs to the glycosyl hydrolase 3 family. NagZ subfamily.

The protein resides in the cytoplasm. The catalysed reaction is Hydrolysis of terminal non-reducing N-acetyl-D-hexosamine residues in N-acetyl-beta-D-hexosaminides.. It functions in the pathway cell wall biogenesis; peptidoglycan recycling. In terms of biological role, plays a role in peptidoglycan recycling by cleaving the terminal beta-1,4-linked N-acetylglucosamine (GlcNAc) from peptide-linked peptidoglycan fragments, giving rise to free GlcNAc, anhydro-N-acetylmuramic acid and anhydro-N-acetylmuramic acid-linked peptides. In Haemophilus ducreyi (strain 35000HP / ATCC 700724), this protein is Beta-hexosaminidase.